A 97-amino-acid polypeptide reads, in one-letter code: Cell division topological specificity factor (97 aa).

It belongs to the MinE family.

Prevents the cell division inhibition by proteins MinC and MinD at internal division sites while permitting inhibition at polar sites. This ensures cell division at the proper site by restricting the formation of a division septum at the midpoint of the long axis of the cell. In Synechococcus sp. (strain RCC307), this protein is Cell division topological specificity factor.